The primary structure comprises 525 residues: GMP synthase [glutamine-hydrolyzing] (525 aa).

Residues P8–D206 form the Glutamine amidotransferase type-1 domain. Residue C85 is the Nucleophile of the active site. Active-site residues include H180 and E182. One can recognise a GMPS ATP-PPase domain in the interval W207–R400. S234–S240 lines the ATP pocket.

As to quaternary structure, homodimer.

The enzyme catalyses XMP + L-glutamine + ATP + H2O = GMP + L-glutamate + AMP + diphosphate + 2 H(+). It functions in the pathway purine metabolism; GMP biosynthesis; GMP from XMP (L-Gln route): step 1/1. Its function is as follows. Catalyzes the synthesis of GMP from XMP. The protein is GMP synthase [glutamine-hydrolyzing] of Legionella pneumophila (strain Lens).